Reading from the N-terminus, the 112-residue chain is uncharacterized protein (112 aa).

The chain crosses the membrane as a helical span at residues 75-95 (ILGVFGGFIYILTPLPIVSGF).

The protein localises to the membrane. This is an uncharacterized protein from Methanocaldococcus jannaschii (strain ATCC 43067 / DSM 2661 / JAL-1 / JCM 10045 / NBRC 100440) (Methanococcus jannaschii).